A 121-amino-acid polypeptide reads, in one-letter code: Prefoldin subunit beta (121 aa).

Belongs to the prefoldin subunit beta family. Heterohexamer of two alpha and four beta subunits.

It localises to the cytoplasm. Functionally, molecular chaperone capable of stabilizing a range of proteins. Seems to fulfill an ATP-independent, HSP70-like function in archaeal de novo protein folding. The sequence is that of Prefoldin subunit beta from Methanosphaerula palustris (strain ATCC BAA-1556 / DSM 19958 / E1-9c).